The following is a 135-amino-acid chain: UPF0102 protein Aave_0630 (135 aa).

The interval 1–21 (MGILEKKTAGPGGAARKTTTR) is disordered.

Belongs to the UPF0102 family.

The protein is UPF0102 protein Aave_0630 of Paracidovorax citrulli (strain AAC00-1) (Acidovorax citrulli).